The following is a 458-amino-acid chain: Argininosuccinate lyase (458 aa).

This sequence belongs to the lyase 1 family. Argininosuccinate lyase subfamily.

It is found in the cytoplasm. It carries out the reaction 2-(N(omega)-L-arginino)succinate = fumarate + L-arginine. Its pathway is amino-acid biosynthesis; L-arginine biosynthesis; L-arginine from L-ornithine and carbamoyl phosphate: step 3/3. This Actinobacillus pleuropneumoniae serotype 5b (strain L20) protein is Argininosuccinate lyase.